The primary structure comprises 400 residues: Elongation factor Tu (400 aa).

Positions 10-209 (KPHVNIGTIG…EVDNYIPTPE (200 aa)) constitute a tr-type G domain. Positions 19 to 26 (GHVDHGKT) are G1. 19–26 (GHVDHGKT) lines the GTP pocket. A Mg(2+)-binding site is contributed by T26. A G2 region spans residues 60-64 (GITIN). The interval 81–84 (DCPG) is G3. Residues 81–85 (DCPGH) and 136–139 (NKCD) contribute to the GTP site. Residues 136 to 139 (NKCD) are G4. Residues 174 to 176 (SAL) are G5.

This sequence belongs to the TRAFAC class translation factor GTPase superfamily. Classic translation factor GTPase family. EF-Tu/EF-1A subfamily. As to quaternary structure, monomer.

The protein resides in the cytoplasm. It catalyses the reaction GTP + H2O = GDP + phosphate + H(+). GTP hydrolase that promotes the GTP-dependent binding of aminoacyl-tRNA to the A-site of ribosomes during protein biosynthesis. The chain is Elongation factor Tu from Ruminiclostridium cellulolyticum (strain ATCC 35319 / DSM 5812 / JCM 6584 / H10) (Clostridium cellulolyticum).